The following is a 501-amino-acid chain: MCPVTTFLVLVLTLLVLVYVFLTWNFNYWRKRGIKTAPTWPFVGSFPSIFTRKRNIAYDIDDIYEKYKDTDNMVGVFTTRVPQLLVMCPEYIHKIYATDFRSFHNNEWRNFVNKKTDMILGNNPFVLTGDEWKERRSEIMPALSPNRVKAVYPVSQSVCKKFVEYIRRQQQMATSEGLDAMDLSLCYTTEVVSDCGLGVSAQSFTDTPTPLLKMIKRVFNTSFEFIFYSVVTNLWQKVRKFYSVPFFNKETEVFFLDIIRRCITLRLEKPEQQRDDFLNYMLQLQEKKGLHTDNILINTMTFILDGFETTALVLAHIMLMLGRNPEEQDKVRKEIGSADLTFDQMSELPHLDACIYETLRLFSPQVAARKLVTEPFEFANKNGRTVHLKPGDVVTIPVKALHHDPQYYEDPLTFKPERFLESNGGGMKSYRDRGVYLAFGDGPRHCPGMRFALTQLKAALVEILRNFEIKVNPKTRSDNQIDDTFFMATLKGGIYLDFKDL.

A heme-binding site is contributed by cysteine 446.

The protein belongs to the cytochrome P450 family. The cofactor is heme.

The protein resides in the endoplasmic reticulum membrane. Its subcellular location is the microsome membrane. May be involved in the metabolism of insect hormones and in the breakdown of synthetic insecticides. In Drosophila melanogaster (Fruit fly), this protein is Probable cytochrome P450 28d2 (Cyp28d2).